A 230-amino-acid chain; its full sequence is UPF0758 protein plu4865 (230 aa).

An MPN domain is found at 108 to 230 (IMSSPSVTQE…CVSFAERGWI (123 aa)). Zn(2+) is bound by residues histidine 179, histidine 181, and aspartate 192. The short motif at 179 to 192 (HNHPSGHAEPSLAD) is the JAMM motif element.

The protein belongs to the UPF0758 family. YicR subfamily.

In Photorhabdus laumondii subsp. laumondii (strain DSM 15139 / CIP 105565 / TT01) (Photorhabdus luminescens subsp. laumondii), this protein is UPF0758 protein plu4865.